A 102-amino-acid chain; its full sequence is MTVPLTQYLLVAAILFTIGVAGIILNRKNIIIILMSVELILLSVNLNLVAFSASLGDLTGQIFALFILTVAAAEAAIGLAILVTFYRNRGSIAVEDIHMMKG.

The next 3 membrane-spanning stretches (helical) occupy residues 5–25 (LTQY…GIIL), 30–50 (IIII…NLVA), and 62–82 (IFAL…LAIL).

It belongs to the complex I subunit 4L family. NDH-1 is composed of 14 different subunits. Subunits NuoA, H, J, K, L, M, N constitute the membrane sector of the complex.

It localises to the cell inner membrane. It carries out the reaction a quinone + NADH + 5 H(+)(in) = a quinol + NAD(+) + 4 H(+)(out). Its function is as follows. NDH-1 shuttles electrons from NADH, via FMN and iron-sulfur (Fe-S) centers, to quinones in the respiratory chain. The immediate electron acceptor for the enzyme in this species is believed to be ubiquinone. Couples the redox reaction to proton translocation (for every two electrons transferred, four hydrogen ions are translocated across the cytoplasmic membrane), and thus conserves the redox energy in a proton gradient. The chain is NADH-quinone oxidoreductase subunit K from Beijerinckia indica subsp. indica (strain ATCC 9039 / DSM 1715 / NCIMB 8712).